Consider the following 842-residue polypeptide: Alanine--tRNA ligase (842 aa).

Histidine 549, histidine 553, cysteine 650, and histidine 654 together coordinate Zn(2+).

This sequence belongs to the class-II aminoacyl-tRNA synthetase family. Zn(2+) is required as a cofactor.

The protein resides in the cytoplasm. The catalysed reaction is tRNA(Ala) + L-alanine + ATP = L-alanyl-tRNA(Ala) + AMP + diphosphate. Its function is as follows. Catalyzes the attachment of alanine to tRNA(Ala) in a two-step reaction: alanine is first activated by ATP to form Ala-AMP and then transferred to the acceptor end of tRNA(Ala). Also edits incorrectly charged Ser-tRNA(Ala) and Gly-tRNA(Ala) via its editing domain. This Campylobacter jejuni subsp. jejuni serotype O:6 (strain 81116 / NCTC 11828) protein is Alanine--tRNA ligase.